The primary structure comprises 85 residues: Protein RnfH (85 aa).

The protein belongs to the UPF0125 (RnfH) family.

In Cereibacter sphaeroides (strain ATCC 17023 / DSM 158 / JCM 6121 / CCUG 31486 / LMG 2827 / NBRC 12203 / NCIMB 8253 / ATH 2.4.1.) (Rhodobacter sphaeroides), this protein is Protein RnfH.